A 124-amino-acid polypeptide reads, in one-letter code: Fluoride-specific ion channel FluC (124 aa).

Helical transmembrane passes span 1–21, 38–58, 69–89, and 99–119; these read MVPL…LRFA, TLAV…LFLI, GLMV…LDTV, and LALG…WAGL. Residues glycine 76 and threonine 79 each contribute to the Na(+) site.

Belongs to the fluoride channel Fluc/FEX (TC 1.A.43) family.

The protein resides in the cell inner membrane. The enzyme catalyses fluoride(in) = fluoride(out). Na(+) is not transported, but it plays an essential structural role and its presence is essential for fluoride channel function. Functionally, fluoride-specific ion channel. Important for reducing fluoride concentration in the cell, thus reducing its toxicity. This Pseudomonas fluorescens (strain Pf0-1) protein is Fluoride-specific ion channel FluC.